The following is a 51-amino-acid chain: Large ribosomal subunit protein bL33 (51 aa).

This sequence belongs to the bacterial ribosomal protein bL33 family.

This Nitrosospira multiformis (strain ATCC 25196 / NCIMB 11849 / C 71) protein is Large ribosomal subunit protein bL33.